Here is a 412-residue protein sequence, read N- to C-terminus: Subtilisin-like protease 6 (412 aa).

The N-terminal stretch at 1 to 20 (MGFITKAIPIVLAALSTVNG) is a signal peptide. Residues 21 to 127 (AKILEAGPHA…VRTSTNGTNL (107 aa)) constitute a propeptide that is removed on maturation. The region spanning 36-120 (KYIVVMKREV…YIEPDFVVRT (85 aa)) is the Inhibitor I9 domain. N-linked (GlcNAc...) asparagine glycosylation is found at Asn123 and Asn126. Residues 135–412 (SWGLARVSSK…SKLIYNGSGK (278 aa)) enclose the Peptidase S8 domain. Residues Asp167 and His198 each act as charge relay system in the active site. Residues Asn252 and Asn264 are each glycosylated (N-linked (GlcNAc...) asparagine). Ser358 functions as the Charge relay system in the catalytic mechanism. An N-linked (GlcNAc...) asparagine glycan is attached at Asn408.

Belongs to the peptidase S8 family.

The protein localises to the secreted. Its function is as follows. Secreted subtilisin-like serine protease with keratinolytic activity that contributes to pathogenicity. The sequence is that of Subtilisin-like protease 6 (SUB6) from Trichophyton tonsurans (Scalp ringworm fungus).